The sequence spans 136 residues: Histone H3.2 (136 aa).

The tract at residues 1–43 is disordered; the sequence is MARTKQTARKSTGGKAPRKQLATKAARKSAPATGGVKKPHRFR. Lysine 5 is modified (N6-methylated lysine). At lysine 10 the chain carries N6-acetyllysine; alternate. Lysine 10 bears the N6-methylated lysine; alternate mark. The residue at position 11 (serine 11) is a Phosphoserine. At threonine 12 the chain carries Phosphothreonine. The residue at position 15 (lysine 15) is an N6-acetyllysine. N6-acetyllysine; alternate is present on residues lysine 19 and lysine 24. N6-methylated lysine; alternate is present on residues lysine 19 and lysine 24. N6-methylated lysine is present on lysine 28. Serine 29 bears the Phosphoserine mark. An N6-methylated lysine modification is found at lysine 37.

The protein belongs to the histone H3 family. As to quaternary structure, the nucleosome is a histone octamer containing two molecules each of H2A, H2B, H3 and H4 assembled in one H3-H4 heterotetramer and two H2A-H2B heterodimers. The octamer wraps approximately 147 bp of DNA. Post-translationally, acetylation is generally linked to gene activation. Can be acetylated to form H3K9ac, H3K14ac, H3K18ac and H3K23ac. H3K9ac could compete with H3K9me and prevent gene silencing. H3K9ac is restricted to euchromatin. In terms of processing, methylated to form mainly H3K4me, H3K9me, H3K18me, H3K23me, H3K27me and H3K36me. H3K4me1/2/3, H3K9me3, H3K27me3 and H3K36me1/2/3 are typical marks for euchromatin, whereas heterochromatic chromocenters are enriched in H3K9me1/2 and H3K27me1/2. H2BK143ub1 is probably prerequisite for H3K4me. Can be phosphorylated to form H3S10ph, H3T11ph and H3S28ph.

The protein localises to the nucleus. It is found in the chromosome. Core component of nucleosome. Nucleosomes wrap and compact DNA into chromatin, limiting DNA accessibility to the cellular machineries which require DNA as a template. Histones thereby play a central role in transcription regulation, DNA repair, DNA replication and chromosomal stability. DNA accessibility is regulated via a complex set of post-translational modifications of histones, also called histone code, and nucleosome remodeling. The polypeptide is Histone H3.2 (Triticum aestivum (Wheat)).